The sequence spans 551 residues: Probable terpene synthase 8 (551 aa).

Positions 307, 311, and 457 each coordinate Mg(2+). A DDXXD motif motif is present at residues 307 to 311; it reads DDTYD.

This sequence belongs to the terpene synthase family. Requires Mg(2+) as cofactor.

Probable sesquiterpene synthase. The protein is Probable terpene synthase 8 (TPS8) of Ricinus communis (Castor bean).